Consider the following 337-residue polypeptide: Tryptophan--tRNA ligase (337 aa).

ATP-binding positions include 11–13 (QPT) and 19–20 (GN). A 'HIGH' region motif is present at residues 12 to 20 (PTGNLHLGN). Asp135 provides a ligand contact to L-tryptophan. ATP contacts are provided by residues 147–149 (GED), Val190, and 199–203 (KMSKS). A 'KMSKS' region motif is present at residues 199 to 203 (KMSKS).

The protein belongs to the class-I aminoacyl-tRNA synthetase family. As to quaternary structure, homodimer.

The protein resides in the cytoplasm. The enzyme catalyses tRNA(Trp) + L-tryptophan + ATP = L-tryptophyl-tRNA(Trp) + AMP + diphosphate + H(+). Catalyzes the attachment of tryptophan to tRNA(Trp). In Synechocystis sp. (strain ATCC 27184 / PCC 6803 / Kazusa), this protein is Tryptophan--tRNA ligase.